Here is a 236-residue protein sequence, read N- to C-terminus: uncharacterized protein (236 aa).

It belongs to the RHS family.

This is an uncharacterized protein from Escherichia coli (strain K12).